Here is a 193-residue protein sequence, read N- to C-terminus: Ion-translocating oxidoreductase complex subunit A (193 aa).

A run of 6 helical transmembrane segments spans residues 5–25 (LLLF…FLGL), 39–59 (MGMG…AWLI), 63–83 (ILIP…VIAV), 102–122 (LLGI…VALL), 134–154 (ALYG…FTAI), and 171–191 (AIAL…SGLV).

Belongs to the NqrDE/RnfAE family. The complex is composed of six subunits: RsxA, RsxB, RsxC, RsxD, RsxE and RsxG.

Its subcellular location is the cell inner membrane. In terms of biological role, part of a membrane-bound complex that couples electron transfer with translocation of ions across the membrane. Required to maintain the reduced state of SoxR. The chain is Ion-translocating oxidoreductase complex subunit A from Shigella boydii serotype 4 (strain Sb227).